The chain runs to 293 residues: ATP synthase subunit a (293 aa).

Helical transmembrane passes span 39-59, 73-93, 102-122, 128-148, 172-192, 198-218, 224-244, and 245-265; these read QVFG…VYWI, FVLL…DLIG, YFLM…LGGI, SLTF…IMGI, TLIP…SISL, ILGG…AFST, LALS…HVYF, and DVVV…NYWA.

The protein belongs to the ATPase A chain family. F-type ATPases have 2 components, CF(1) - the catalytic core - and CF(0) - the membrane proton channel. CF(1) has five subunits: alpha(3), beta(3), gamma(1), delta(1), epsilon(1). CF(0) has three main subunits: a(1), b(2) and c(9-12). The alpha and beta chains form an alternating ring which encloses part of the gamma chain. CF(1) is attached to CF(0) by a central stalk formed by the gamma and epsilon chains, while a peripheral stalk is formed by the delta and b chains.

The protein resides in the cell membrane. Its function is as follows. Key component of the proton channel; it plays a direct role in the translocation of protons across the membrane. In Mycoplasma pneumoniae (strain ATCC 29342 / M129 / Subtype 1) (Mycoplasmoides pneumoniae), this protein is ATP synthase subunit a.